The primary structure comprises 1358 residues: DNA-directed RNA polymerase subunit beta (1358 aa).

The protein belongs to the RNA polymerase beta chain family. The RNAP catalytic core consists of 2 alpha, 1 beta, 1 beta' and 1 omega subunit. When a sigma factor is associated with the core the holoenzyme is formed, which can initiate transcription.

The catalysed reaction is RNA(n) + a ribonucleoside 5'-triphosphate = RNA(n+1) + diphosphate. Its function is as follows. DNA-dependent RNA polymerase catalyzes the transcription of DNA into RNA using the four ribonucleoside triphosphates as substrates. The polypeptide is DNA-directed RNA polymerase subunit beta (Xanthobacter autotrophicus (strain ATCC BAA-1158 / Py2)).